The sequence spans 332 residues: Glycerol-3-phosphate dehydrogenase [NAD(P)+] (332 aa).

The NADPH site is built by S11, F12, K32, and K106. K106, G137, and S139 together coordinate sn-glycerol 3-phosphate. A141 lines the NADPH pocket. Residues K192, D245, S255, R256, and N257 each coordinate sn-glycerol 3-phosphate. K192 (proton acceptor) is an active-site residue. Residue R256 coordinates NADPH. Positions 280 and 282 each coordinate NADPH.

The protein belongs to the NAD-dependent glycerol-3-phosphate dehydrogenase family.

The protein resides in the cytoplasm. It carries out the reaction sn-glycerol 3-phosphate + NAD(+) = dihydroxyacetone phosphate + NADH + H(+). It catalyses the reaction sn-glycerol 3-phosphate + NADP(+) = dihydroxyacetone phosphate + NADPH + H(+). Its pathway is membrane lipid metabolism; glycerophospholipid metabolism. Catalyzes the reduction of the glycolytic intermediate dihydroxyacetone phosphate (DHAP) to sn-glycerol 3-phosphate (G3P), the key precursor for phospholipid synthesis. In Staphylococcus epidermidis (strain ATCC 35984 / DSM 28319 / BCRC 17069 / CCUG 31568 / BM 3577 / RP62A), this protein is Glycerol-3-phosphate dehydrogenase [NAD(P)+].